Consider the following 172-residue polypeptide: Ribosome maturation factor RimM (172 aa).

One can recognise a PRC barrel domain in the interval 92 to 167; it reads ENEFYHSDLV…VILKLPEIIG (76 aa).

The protein belongs to the RimM family. As to quaternary structure, binds ribosomal protein uS19.

The protein resides in the cytoplasm. Its function is as follows. An accessory protein needed during the final step in the assembly of 30S ribosomal subunit, possibly for assembly of the head region. Essential for efficient processing of 16S rRNA. May be needed both before and after RbfA during the maturation of 16S rRNA. It has affinity for free ribosomal 30S subunits but not for 70S ribosomes. This Ehrlichia ruminantium (strain Gardel) protein is Ribosome maturation factor RimM.